The sequence spans 239 residues: Ribosomal RNA small subunit methyltransferase G (239 aa).

Residues glycine 79, phenylalanine 84, 130-131 (AE), and arginine 149 contribute to the S-adenosyl-L-methionine site. The segment at 218–239 (KKTKTPKKYPRQAGTPSKKPIS) is disordered.

It belongs to the methyltransferase superfamily. RNA methyltransferase RsmG family.

It localises to the cytoplasm. In terms of biological role, specifically methylates the N7 position of a guanine in 16S rRNA. The polypeptide is Ribosomal RNA small subunit methyltransferase G (Leuconostoc mesenteroides subsp. mesenteroides (strain ATCC 8293 / DSM 20343 / BCRC 11652 / CCM 1803 / JCM 6124 / NCDO 523 / NBRC 100496 / NCIMB 8023 / NCTC 12954 / NRRL B-1118 / 37Y)).